A 309-amino-acid polypeptide reads, in one-letter code: Methionyl-tRNA formyltransferase (309 aa).

Residue 109 to 112 (SLLP) participates in (6S)-5,6,7,8-tetrahydrofolate binding.

This sequence belongs to the Fmt family.

It carries out the reaction L-methionyl-tRNA(fMet) + (6R)-10-formyltetrahydrofolate = N-formyl-L-methionyl-tRNA(fMet) + (6S)-5,6,7,8-tetrahydrofolate + H(+). In terms of biological role, attaches a formyl group to the free amino group of methionyl-tRNA(fMet). The formyl group appears to play a dual role in the initiator identity of N-formylmethionyl-tRNA by promoting its recognition by IF2 and preventing the misappropriation of this tRNA by the elongation apparatus. The sequence is that of Methionyl-tRNA formyltransferase from Clostridioides difficile (strain 630) (Peptoclostridium difficile).